A 189-amino-acid chain; its full sequence is Peptidyl-tRNA hydrolase (189 aa).

Y15 contacts tRNA. H20 functions as the Proton acceptor in the catalytic mechanism. TRNA is bound by residues F66, N68, and N114.

It belongs to the PTH family. In terms of assembly, monomer.

The protein localises to the cytoplasm. It carries out the reaction an N-acyl-L-alpha-aminoacyl-tRNA + H2O = an N-acyl-L-amino acid + a tRNA + H(+). In terms of biological role, hydrolyzes ribosome-free peptidyl-tRNAs (with 1 or more amino acids incorporated), which drop off the ribosome during protein synthesis, or as a result of ribosome stalling. Functionally, catalyzes the release of premature peptidyl moieties from peptidyl-tRNA molecules trapped in stalled 50S ribosomal subunits, and thus maintains levels of free tRNAs and 50S ribosomes. This chain is Peptidyl-tRNA hydrolase, found in Streptococcus suis (strain 98HAH33).